The chain runs to 354 residues: NADH-ubiquinone oxidoreductase chain 2 (354 aa).

Helical transmembrane passes span 5-25 (ILMV…SSHH), 26-46 (WFTL…ILSY), 60-80 (FLVQ…QAWL), 96-116 (FLMT…YWFP), 122-142 (VGFI…FAVL), 149-169 (LNIS…GWGG), 198-218 (VSVA…VFFM), 242-262 (AGLV…GFLI), 274-294 (GCFI…FFYL), and 330-350 (VLLS…PVFI).

This sequence belongs to the complex I subunit 2 family.

It is found in the mitochondrion inner membrane. It catalyses the reaction a ubiquinone + NADH + 5 H(+)(in) = a ubiquinol + NAD(+) + 4 H(+)(out). Its function is as follows. Core subunit of the mitochondrial membrane respiratory chain NADH dehydrogenase (Complex I) that is believed to belong to the minimal assembly required for catalysis. Complex I functions in the transfer of electrons from NADH to the respiratory chain. The immediate electron acceptor for the enzyme is believed to be ubiquinone. This is NADH-ubiquinone oxidoreductase chain 2 (ND2) from Patiria pectinifera (Starfish).